Reading from the N-terminus, the 298-residue chain is MAAIAFIGLGQMGSPMASNLLQQGHQLRVFDVNAEAVRHLVDKGATPAANPAQAAKDAEFIITMLPNGDLVRNVLFGENGVCEGLSTDALVIDMSTIHPLQTDKLIADMQAKGFSMMDVPVGRTSANAITGTLLLLAGGTAEQVERATPILMAMGSELINAGGPGMGIRVKLINNYMSIALNALSAEAAVLCEALNLPFDVAVKVMSGTAAGKGHFTTSWPNKVLSGDLSPAFMIDLAHKDLGIALDVANQLHVPMPLGAASREVYSQARAAGRGRQDWSAILEQVRVSAGMTAKVKM.

Residues 11 to 12 (QM), D31, L65, and T96 contribute to the NAD(+) site. R123 lines the 2,3-dihydroxypropane-1-sulfonate pocket. K171 is a catalytic residue. Residue 174–178 (NNYMS) coordinates 2,3-dihydroxypropane-1-sulfonate. K240 is an NAD(+) binding site.

Belongs to the HIBADH-related family. 3-sulfolactaldehyde reductase subfamily. As to quaternary structure, homotetramer. Dimer of dimers.

It catalyses the reaction (2S)-3-sulfopropanediol + NAD(+) = (2S)-3-sulfolactaldehyde + NADH + H(+). It carries out the reaction 4-hydroxybutanoate + NAD(+) = succinate semialdehyde + NADH + H(+). With respect to regulation, inhibited by the NADH analogs tetrahydro-NADH and hexahydro-NADH. Functionally, reduces 3-sulfolactaldehyde (SLA) to 2,3-dihydroxypropane 1-sulfonate (DHPS). Metabolite profiling studies showed that the enzyme also catalyzes in vitro the NADH-dependent reduction of succinic semialdehyde (SSA) to 4-hydroxybutyrate (GHB), and that it could be involved in the metabolism of SSA, and other potentially toxic intermediates that may accumulate under stress conditions. However, the enzyme exhibits a 42,000-fold greater catalytic efficiency for the reduction of SLA over SSA. Shows no detectable activity on the analogous glycolytic intermediate glyceraldehyde-3-phosphate. The polypeptide is 3-sulfolactaldehyde reductase (yihU) (Escherichia coli (strain K12)).